The primary structure comprises 417 residues: NADH-quinone oxidoreductase subunit D (417 aa).

It belongs to the complex I 49 kDa subunit family. In terms of assembly, NDH-1 is composed of 14 different subunits. Subunits NuoB, C, D, E, F, and G constitute the peripheral sector of the complex.

Its subcellular location is the cell inner membrane. The catalysed reaction is a quinone + NADH + 5 H(+)(in) = a quinol + NAD(+) + 4 H(+)(out). In terms of biological role, NDH-1 shuttles electrons from NADH, via FMN and iron-sulfur (Fe-S) centers, to quinones in the respiratory chain. The immediate electron acceptor for the enzyme in this species is believed to be ubiquinone. Couples the redox reaction to proton translocation (for every two electrons transferred, four hydrogen ions are translocated across the cytoplasmic membrane), and thus conserves the redox energy in a proton gradient. This Methylibium petroleiphilum (strain ATCC BAA-1232 / LMG 22953 / PM1) protein is NADH-quinone oxidoreductase subunit D.